The following is a 583-amino-acid chain: Ferredoxin--nitrite reductase, chloroplastic (583 aa).

The transit peptide at 1–22 (MSSLSVRFLSPPLFSSTPAWPR) directs the protein to the chloroplast. Positions 461, 467, 502, and 506 each coordinate [4Fe-4S] cluster. A siroheme-binding site is contributed by C506.

This sequence belongs to the nitrite and sulfite reductase 4Fe-4S domain family. As to quaternary structure, monomer. It depends on siroheme as a cofactor. Requires [4Fe-4S] cluster as cofactor.

Its subcellular location is the plastid. The protein localises to the chloroplast. The enzyme catalyses 6 oxidized [2Fe-2S]-[ferredoxin] + NH4(+) + 2 H2O = nitrite + 6 reduced [2Fe-2S]-[ferredoxin] + 8 H(+). The protein operates within nitrogen metabolism; nitrate reduction (assimilation). This is Ferredoxin--nitrite reductase, chloroplastic (NIR1) from Betula pendula (European white birch).